A 110-amino-acid chain; its full sequence is Bowman-Birk type proteinase inhibitor (110 aa).

The N-terminal stretch at 1 to 19 (MVVLKVCLVLLFLVGGTTS) is a signal peptide. Positions 20-39 (ANLRLSKLGLLMKSDHQHSN) are excised as a propeptide. 7 disulfide bridges follow: Cys47–Cys101, Cys48–Cys63, Cys51–Cys97, Cys53–Cys61, Cys71–Cys78, Cys75–Cys90, and Cys80–Cys88.

It belongs to the Bowman-Birk serine protease inhibitor family.

Its function is as follows. Inhibitor of trypsin and of chymotrypsin. The polypeptide is Bowman-Birk type proteinase inhibitor (Glycine max (Soybean)).